The chain runs to 229 residues: MTAAAVFGCTGAVGSQILATLLASDAFSSVATVSRKLPTAESPKLQAIEEGDTSKWGTTIASLSPKPSVVFNAVGTTRAAAGGIQNQWKIDHDLCIEIAKAAKEAGVKTYVFISSGGTRGFLSRHVPYSKMKIGVEDAIKELGFEHAIILRPGMIIGREKSKAPLFEAIVGHLNKLGQGVQDRIGQDQLIIGRAAVAAARLAEDGKAPSKFWAVEMSDIVRLGRDEWKE.

Residues 1-44 (MTAAAVFGCTGAVGSQILATLLASDAFSSVATVSRKLPTAESPK) constitute a mitochondrion transit peptide.

It belongs to the FMP52 family.

The protein resides in the mitochondrion outer membrane. The sequence is that of Protein fmp52-2, mitochondrial (fmp522) from Aspergillus terreus (strain NIH 2624 / FGSC A1156).